We begin with the raw amino-acid sequence, 427 residues long: Enolase (427 aa).

Gln162 is a (2R)-2-phosphoglycerate binding site. The active-site Proton donor is Glu204. Positions 241, 283, and 310 each coordinate Mg(2+). (2R)-2-phosphoglycerate is bound by residues Lys335, Arg364, Ser365, and Lys386. Catalysis depends on Lys335, which acts as the Proton acceptor.

The protein belongs to the enolase family. Requires Mg(2+) as cofactor.

The protein resides in the cytoplasm. The protein localises to the secreted. Its subcellular location is the cell surface. The enzyme catalyses (2R)-2-phosphoglycerate = phosphoenolpyruvate + H2O. It participates in carbohydrate degradation; glycolysis; pyruvate from D-glyceraldehyde 3-phosphate: step 4/5. In terms of biological role, catalyzes the reversible conversion of 2-phosphoglycerate (2-PG) into phosphoenolpyruvate (PEP). It is essential for the degradation of carbohydrates via glycolysis. This is Enolase from Mycolicibacterium smegmatis (strain ATCC 700084 / mc(2)155) (Mycobacterium smegmatis).